Consider the following 351-residue polypeptide: Uroporphyrinogen decarboxylase (351 aa).

Substrate contacts are provided by residues 25–29 (RQAGR), D74, Y151, S206, and H325.

This sequence belongs to the uroporphyrinogen decarboxylase family. Homodimer.

The protein localises to the cytoplasm. The catalysed reaction is uroporphyrinogen III + 4 H(+) = coproporphyrinogen III + 4 CO2. The protein operates within porphyrin-containing compound metabolism; protoporphyrin-IX biosynthesis; coproporphyrinogen-III from 5-aminolevulinate: step 4/4. Catalyzes the decarboxylation of four acetate groups of uroporphyrinogen-III to yield coproporphyrinogen-III. This chain is Uroporphyrinogen decarboxylase, found in Chlorobium luteolum (strain DSM 273 / BCRC 81028 / 2530) (Pelodictyon luteolum).